Here is a 248-residue protein sequence, read N- to C-terminus: Phosphoglycerate mutase (248 aa).

Residues 8–15, 21–22, R60, 87–90, K98, 114–115, and 183–184 each bind substrate; these read RHGQSEWN, TG, ERHY, RR, and GN. H9 functions as the Tele-phosphohistidine intermediate in the catalytic mechanism. The Proton donor/acceptor role is filled by E87.

This sequence belongs to the phosphoglycerate mutase family. BPG-dependent PGAM subfamily.

Its subcellular location is the cytoplasm. The catalysed reaction is (2R)-2-phosphoglycerate = (2R)-3-phosphoglycerate. The protein operates within carbohydrate degradation; glycolysis; pyruvate from D-glyceraldehyde 3-phosphate: step 3/5. This is Phosphoglycerate mutase (GPM1) from Candida albicans (strain SC5314 / ATCC MYA-2876) (Yeast).